Here is a 451-residue protein sequence, read N- to C-terminus: Tubulin alpha-1 chain (451 aa).

Residue Q11 coordinates GTP. K40 carries the post-translational modification N6-acetyllysine. E71, G144, T145, T179, N206, and N228 together coordinate GTP. Position 71 (E71) interacts with Mg(2+). E254 is an active-site residue. A disordered region spans residues Y432 to Y451.

The protein belongs to the tubulin family. In terms of assembly, dimer of alpha and beta chains. A typical microtubule is a hollow water-filled tube with an outer diameter of 25 nm and an inner diameter of 15 nM. Alpha-beta heterodimers associate head-to-tail to form protofilaments running lengthwise along the microtubule wall with the beta-tubulin subunit facing the microtubule plus end conferring a structural polarity. Microtubules usually have 13 protofilaments but different protofilament numbers can be found in some organisms and specialized cells. Requires Mg(2+) as cofactor. Post-translationally, undergoes a tyrosination/detyrosination cycle, the cyclic removal and re-addition of a C-terminal tyrosine residue by the enzymes tubulin tyrosine carboxypeptidase (TTCP) and tubulin tyrosine ligase (TTL), respectively. In terms of processing, acetylation of alpha chains at Lys-40 stabilizes microtubules and affects affinity and processivity of microtubule motors. This modification has a role in multiple cellular functions, ranging from cell motility, cell cycle progression or cell differentiation to intracellular trafficking and signaling.

Its subcellular location is the cytoplasm. The protein localises to the cytoskeleton. The catalysed reaction is GTP + H2O = GDP + phosphate + H(+). Functionally, tubulin is the major constituent of microtubules, a cylinder consisting of laterally associated linear protofilaments composed of alpha- and beta-tubulin heterodimers. Microtubules grow by the addition of GTP-tubulin dimers to the microtubule end, where a stabilizing cap forms. Below the cap, tubulin dimers are in GDP-bound state, owing to GTPase activity of alpha-tubulin. The chain is Tubulin alpha-1 chain from Gossypium hirsutum (Upland cotton).